Here is a 224-residue protein sequence, read N- to C-terminus: Adenylate kinase (224 aa).

10-15 (GSGKST) contributes to the ATP binding site. Positions 30 to 59 (ASGDIIRAEINKGNALGREMKKYIEKGDLL) are NMP. AMP-binding positions include serine 31, arginine 36, 57 to 59 (DLL), 83 to 86 (GYPR), and glutamine 90. The LID stretch occupies residues 124-161 (GRRICRQCGAVYHIKYNPSKVPGKCDICGGEVIQREDD). Arginine 125 contacts ATP. Cysteine 128 and cysteine 131 together coordinate Zn(2+). 134–135 (VY) is an ATP binding site. 2 residues coordinate Zn(2+): cysteine 148 and cysteine 151. Residues arginine 158 and arginine 169 each contribute to the AMP site. ATP is bound at residue glycine 197.

The protein belongs to the adenylate kinase family. Monomer.

Its subcellular location is the cytoplasm. It carries out the reaction AMP + ATP = 2 ADP. It participates in purine metabolism; AMP biosynthesis via salvage pathway; AMP from ADP: step 1/1. In terms of biological role, catalyzes the reversible transfer of the terminal phosphate group between ATP and AMP. Plays an important role in cellular energy homeostasis and in adenine nucleotide metabolism. The polypeptide is Adenylate kinase (Thermococcus sibiricus (strain DSM 12597 / MM 739)).